A 141-amino-acid chain; its full sequence is Large ribosomal subunit protein uL16 (141 aa).

Belongs to the universal ribosomal protein uL16 family. Part of the 50S ribosomal subunit.

Binds 23S rRNA and is also seen to make contacts with the A and possibly P site tRNAs. The protein is Large ribosomal subunit protein uL16 of Thermus thermophilus (strain ATCC BAA-163 / DSM 7039 / HB27).